We begin with the raw amino-acid sequence, 163 residues long: Crossover junction endodeoxyribonuclease RuvC (163 aa).

Catalysis depends on residues aspartate 7, glutamate 67, and aspartate 140. Aspartate 7, glutamate 67, and aspartate 140 together coordinate Mg(2+).

The protein belongs to the RuvC family. Homodimer which binds Holliday junction (HJ) DNA. The HJ becomes 2-fold symmetrical on binding to RuvC with unstacked arms; it has a different conformation from HJ DNA in complex with RuvA. In the full resolvosome a probable DNA-RuvA(4)-RuvB(12)-RuvC(2) complex forms which resolves the HJ. The cofactor is Mg(2+).

The protein resides in the cytoplasm. The catalysed reaction is Endonucleolytic cleavage at a junction such as a reciprocal single-stranded crossover between two homologous DNA duplexes (Holliday junction).. In terms of biological role, the RuvA-RuvB-RuvC complex processes Holliday junction (HJ) DNA during genetic recombination and DNA repair. Endonuclease that resolves HJ intermediates. Cleaves cruciform DNA by making single-stranded nicks across the HJ at symmetrical positions within the homologous arms, yielding a 5'-phosphate and a 3'-hydroxyl group; requires a central core of homology in the junction. The consensus cleavage sequence is 5'-(A/T)TT(C/G)-3'. Cleavage occurs on the 3'-side of the TT dinucleotide at the point of strand exchange. HJ branch migration catalyzed by RuvA-RuvB allows RuvC to scan DNA until it finds its consensus sequence, where it cleaves and resolves the cruciform DNA. This chain is Crossover junction endodeoxyribonuclease RuvC, found in Petrotoga mobilis (strain DSM 10674 / SJ95).